The primary structure comprises 223 residues: DNA mismatch repair protein MutH (223 aa).

The protein belongs to the MutH family.

The protein resides in the cytoplasm. In terms of biological role, sequence-specific endonuclease that cleaves unmethylated GATC sequences. It is involved in DNA mismatch repair. The protein is DNA mismatch repair protein MutH of Haemophilus influenzae (strain PittEE).